The chain runs to 452 residues: AP-4 complex subunit mu-1 (452 aa).

An MHD domain is found at 184 to 451 (KNEVFLDVVE…LSHSDAYVIR (268 aa)).

It belongs to the adaptor complexes medium subunit family. In terms of assembly, adaptor protein complex 4 (AP-4) is a heterotetramer composed of two large adaptins (epsilon-type subunit AP4E1 and beta-type subunit AP4B1), a medium adaptin (mu-type subunit AP4M1) and a small adaptin (sigma-type AP4S1). Interacts with tyrosine-based sorting signals on the cytoplasmic tail of cargo proteins such as APP, ATG9A, LAMP2 and NAGPA. Interacts with the C-terminal domain of GRID2. Interacts with GRIA1 and GRIA2; the interaction is indirect via CACNG3. Interacts with CACNG3; CACNG3 associates GRIA1 and GRIA2 with the adaptor protein complex 4 (AP-4) to target them to the somatodendritic compartment of neurons. Interacts with HOOK1 and HOOK2; the interactions are direct, mediate the interaction between FTS-Hook-FHIP (FHF) complex and AP-4 and the perinuclear distribution of AP-4.

The protein resides in the golgi apparatus. It localises to the trans-Golgi network membrane. The protein localises to the early endosome. Component of the adaptor protein complex 4 (AP-4). Adaptor protein complexes are vesicle coat components involved both in vesicle formation and cargo selection. They control the vesicular transport of proteins in different trafficking pathways. AP-4 forms a non clathrin-associated coat on vesicles departing the trans-Golgi network (TGN) and may be involved in the targeting of proteins from the trans-Golgi network (TGN) to the endosomal-lysosomal system. It is also involved in protein sorting to the basolateral membrane in epithelial cells and the proper asymmetric localization of somatodendritic proteins in neurons. Within AP-4, the mu-type subunit AP4M1 is directly involved in the recognition and binding of tyrosine-based sorting signals found in the cytoplasmic part of cargos. The adaptor protein complex 4 (AP-4) may also recognize other types of sorting signal. This is AP-4 complex subunit mu-1 from Canis lupus familiaris (Dog).